The chain runs to 718 residues: Amino-acid acetyltransferase, mitochondrial (718 aa).

A mitochondrion-targeting transit peptide spans 1-36 (MNPNAVWPRTAQSSLKKHQVSLCTCQRRSHYRLRSF). The segment at 97–116 (QHQPDLPQKPTSAPASTAKI) is disordered. In terms of domain architecture, N-acetyltransferase spans 539 to 708 (RQPRLRLDDP…YEAVCRSIQP (170 aa)).

The protein belongs to the acetyltransferase family.

It localises to the mitochondrion. The enzyme catalyses L-glutamate + acetyl-CoA = N-acetyl-L-glutamate + CoA + H(+). The protein operates within amino-acid biosynthesis; L-arginine biosynthesis; N(2)-acetyl-L-ornithine from L-glutamate: step 1/4. In terms of biological role, N-acetylglutamate synthase involved in arginine biosynthesis. This chain is Amino-acid acetyltransferase, mitochondrial (arg2), found in Aspergillus clavatus (strain ATCC 1007 / CBS 513.65 / DSM 816 / NCTC 3887 / NRRL 1 / QM 1276 / 107).